The following is a 191-amino-acid chain: Photosystem I assembly protein Ycf4 (191 aa).

2 consecutive transmembrane segments (helical) span residues leucine 33–tyrosine 53 and leucine 74–isoleucine 94.

The protein belongs to the Ycf4 family.

The protein resides in the cellular thylakoid membrane. Seems to be required for the assembly of the photosystem I complex. This chain is Photosystem I assembly protein Ycf4, found in Prochlorococcus marinus (strain MIT 9303).